Reading from the N-terminus, the 183-residue chain is Outer membrane protein H.8 (183 aa).

The N-terminal stretch at 1–17 (MKAYLALISAAVIGLAA) is a signal peptide. A lipid anchor (N-palmitoyl cysteine) is attached at cysteine 18. Cysteine 18 is lipidated: S-diacylglycerol cysteine. Residues 27–51 (AEATPAGEAPASEAPAAEAAPADAA) are disordered. Positions 57–183 (GNCAATVESN…LMNGKVTLVD (127 aa)) constitute a Plastocyanin-like domain. 4 residues coordinate Cu cation: histidine 102, cysteine 166, histidine 171, and methionine 175.

The cofactor is Cu cation.

It localises to the cell outer membrane. The chain is Outer membrane protein H.8 from Neisseria gonorrhoeae.